The primary structure comprises 148 residues: Gag-Pol polyprotein (148 aa).

Residues 1 to 64 (IPYNPQSQGV…SAGERIIDII (64 aa)) form the Integrase catalytic domain. Residue Glu-12 participates in Mg(2+) binding. Residues 83–130 (FRVYYRDSRDPIWKGPAKLLWKGEGAVVIQDNSDIKVVPRRKVKIIRD) constitute a DNA-binding region (integrase-type).

As to quaternary structure, homotetramer; may further associate as a homohexadecamer. Part of the pre-integration complex (PIC) which is composed of viral genome, matrix protein, Vpr and integrase. Interacts with human SMARCB1/INI1 and human PSIP1/LEDGF isoform 1. Interacts with human KPNA3; this interaction might play a role in nuclear import of the pre-integration complex. Interacts with human NUP153; this interaction might play a role in nuclear import of the pre-integration complex. In terms of processing, specific enzymatic cleavages by the viral protease yield mature proteins.

Its function is as follows. Catalyzes viral DNA integration into the host chromosome, by performing a series of DNA cutting and joining reactions. This enzyme activity takes place after virion entry into a cell and reverse transcription of the RNA genome in dsDNA. The first step in the integration process is 3' processing. This step requires a complex comprising the viral genome, matrix protein, Vpr and integrase. This complex is called the pre-integration complex (PIC). The integrase protein removes 2 nucleotides from each 3' end of the viral DNA, leaving recessed CA OH's at the 3' ends. In the second step, the PIC enters cell nucleus. This process is mediated through integrase and Vpr proteins, and allows the virus to infect a non dividing cell. This ability to enter the nucleus is specific of lentiviruses, other retroviruses cannot and rely on cell division to access cell chromosomes. In the third step, termed strand transfer, the integrase protein joins the previously processed 3' ends to the 5' ends of strands of target cellular DNA at the site of integration. The 5'-ends are produced by integrase-catalyzed staggered cuts, 5 bp apart. A Y-shaped, gapped, recombination intermediate results, with the 5'-ends of the viral DNA strands and the 3' ends of target DNA strands remaining unjoined, flanking a gap of 5 bp. The last step is viral DNA integration into host chromosome. This involves host DNA repair synthesis in which the 5 bp gaps between the unjoined strands are filled in and then ligated. Since this process occurs at both cuts flanking the HIV genome, a 5 bp duplication of host DNA is produced at the ends of HIV-1 integration. Alternatively, Integrase may catalyze the excision of viral DNA just after strand transfer, this is termed disintegration. The protein is Gag-Pol polyprotein (gag-pol) of Homo sapiens (Human).